A 290-amino-acid chain; its full sequence is Iron-sulfur cluster carrier protein (290 aa).

47–54 lines the ATP pocket; it reads GKGGVGKS.

It belongs to the Mrp/NBP35 ATP-binding proteins family. As to quaternary structure, homodimer.

In terms of biological role, binds and transfers iron-sulfur (Fe-S) clusters to target apoproteins. Can hydrolyze ATP. The polypeptide is Iron-sulfur cluster carrier protein (Methanocaldococcus jannaschii (strain ATCC 43067 / DSM 2661 / JAL-1 / JCM 10045 / NBRC 100440) (Methanococcus jannaschii)).